A 640-amino-acid chain; its full sequence is Chaperone protein DnaK (640 aa).

Thr-198 is subject to Phosphothreonine; by autocatalysis. A disordered region spans residues 600-640 (KTQGAGAEGGEQPHGEQEAGGAAKGEKVVDADFEEVKDDKK). Acidic residues predominate over residues 630–640 (ADFEEVKDDKK).

This sequence belongs to the heat shock protein 70 family.

In terms of biological role, acts as a chaperone. This is Chaperone protein DnaK from Citrifermentans bemidjiense (strain ATCC BAA-1014 / DSM 16622 / JCM 12645 / Bem) (Geobacter bemidjiensis).